The following is a 481-amino-acid chain: Pyruvate kinase (481 aa).

Residue R33 participates in substrate binding. Positions 35, 37, 67, and 68 each coordinate K(+). 35-38 (NFSH) provides a ligand contact to ATP. ATP is bound by residues R74 and K155. E221 contributes to the Mg(2+) binding site. Substrate contacts are provided by G244, D245, and T277. D245 is a Mg(2+) binding site.

This sequence belongs to the pyruvate kinase family. Homotetramer. Mg(2+) is required as a cofactor. Requires K(+) as cofactor.

It carries out the reaction pyruvate + ATP = phosphoenolpyruvate + ADP + H(+). It participates in carbohydrate degradation; glycolysis; pyruvate from D-glyceraldehyde 3-phosphate: step 5/5. The chain is Pyruvate kinase (pyk) from Chlamydia muridarum (strain MoPn / Nigg).